A 391-amino-acid chain; its full sequence is NADH-quinone oxidoreductase subunit D (391 aa).

It belongs to the complex I 49 kDa subunit family. NDH-1 is composed of 14 different subunits. Subunits NuoB, C, D, E, F, and G constitute the peripheral sector of the complex.

It localises to the cell inner membrane. It catalyses the reaction a quinone + NADH + 5 H(+)(in) = a quinol + NAD(+) + 4 H(+)(out). Functionally, NDH-1 shuttles electrons from NADH, via FMN and iron-sulfur (Fe-S) centers, to quinones in the respiratory chain. The immediate electron acceptor for the enzyme in this species is believed to be ubiquinone. Couples the redox reaction to proton translocation (for every two electrons transferred, four hydrogen ions are translocated across the cytoplasmic membrane), and thus conserves the redox energy in a proton gradient. In Pelagibacter ubique (strain HTCC1062), this protein is NADH-quinone oxidoreductase subunit D.